We begin with the raw amino-acid sequence, 381 residues long: Heme A synthase (381 aa).

The disordered stretch occupies residues 1 to 23; sequence MARRPVFQEVTETTPPGTTPSGG. Positions 11 to 23 are enriched in low complexity; sequence TETTPPGTTPSGG. 8 helical membrane passes run 34 to 54, 120 to 140, 151 to 171, 185 to 205, 228 to 248, 285 to 305, 319 to 339, and 342 to 362; these read GAIR…IALG, RLLG…FLAT, LLLL…MVHS, LATH…YVLA, TTGL…VAGI, LVQF…VVVF, AYVA…MNVL, and SPLP…TLIL. A heme-binding site is contributed by His290. Heme is bound at residue His350.

The protein belongs to the COX15/CtaA family. Type 2 subfamily. As to quaternary structure, interacts with CtaB. The cofactor is heme b.

The protein localises to the cell membrane. The enzyme catalyses Fe(II)-heme o + 2 A + H2O = Fe(II)-heme a + 2 AH2. Its pathway is porphyrin-containing compound metabolism; heme A biosynthesis; heme A from heme O: step 1/1. Its function is as follows. Catalyzes the conversion of heme O to heme A by two successive hydroxylations of the methyl group at C8. The first hydroxylation forms heme I, the second hydroxylation results in an unstable dihydroxymethyl group, which spontaneously dehydrates, resulting in the formyl group of heme A. The polypeptide is Heme A synthase (Paracoccus denitrificans (strain Pd 1222)).